The sequence spans 425 residues: Xylose isomerase (425 aa).

Residues His-101 and Asp-104 contribute to the active site. 7 residues coordinate Mg(2+): Glu-232, Glu-268, His-271, Asp-296, Asp-307, Asp-309, and Asp-339.

It belongs to the xylose isomerase family. As to quaternary structure, homotetramer. Requires Mg(2+) as cofactor.

It localises to the cytoplasm. The enzyme catalyses alpha-D-xylose = alpha-D-xylulofuranose. The protein is Xylose isomerase of Salmonella paratyphi A (strain ATCC 9150 / SARB42).